A 377-amino-acid polypeptide reads, in one-letter code: Chaperone protein DnaJ (377 aa).

The 66-residue stretch at 5 to 70 (DYYEVLGVGR…NKKAAYDQFG (66 aa)) folds into the J domain. A CR-type zinc finger spans residues 133 to 211 (GLTKELRIPT…CHGDGRVEKT (79 aa)). Zn(2+) is bound by residues C146, C149, C163, C166, C185, C188, C199, and C202. 4 CXXCXGXG motif repeats span residues 146–153 (CDVCDGSG), 163–170 (CGTCHGQG), 185–192 (CPTCHGRG), and 199–206 (CTKCHGDG).

This sequence belongs to the DnaJ family. In terms of assembly, homodimer. Requires Zn(2+) as cofactor.

It is found in the cytoplasm. In terms of biological role, participates actively in the response to hyperosmotic and heat shock by preventing the aggregation of stress-denatured proteins and by disaggregating proteins, also in an autonomous, DnaK-independent fashion. Unfolded proteins bind initially to DnaJ; upon interaction with the DnaJ-bound protein, DnaK hydrolyzes its bound ATP, resulting in the formation of a stable complex. GrpE releases ADP from DnaK; ATP binding to DnaK triggers the release of the substrate protein, thus completing the reaction cycle. Several rounds of ATP-dependent interactions between DnaJ, DnaK and GrpE are required for fully efficient folding. Also involved, together with DnaK and GrpE, in the DNA replication of plasmids through activation of initiation proteins. This Shewanella sp. (strain MR-4) protein is Chaperone protein DnaJ.